Reading from the N-terminus, the 662-residue chain is UvrABC system protein B (662 aa).

The Helicase ATP-binding domain maps to 31–188 (DNIEGGEKAQ…NDLVDIQFER (158 aa)). 44–51 (GATGTGKT) is an ATP binding site. Residues 97-120 (YYDYYQPEAYVPSSDTYIEKDSSV) carry the Beta-hairpin motif. The region spanning 435-601 (QIDDLLGEIN…TIKKEIRDLI (167 aa)) is the Helicase C-terminal domain. Residues 626-661 (KDMIKKLEGQMQEAAGLLDFELAAQIRDMILEIKAM) form the UVR domain.

Belongs to the UvrB family. Forms a heterotetramer with UvrA during the search for lesions. Interacts with UvrC in an incision complex.

The protein localises to the cytoplasm. In terms of biological role, the UvrABC repair system catalyzes the recognition and processing of DNA lesions. A damage recognition complex composed of 2 UvrA and 2 UvrB subunits scans DNA for abnormalities. Upon binding of the UvrA(2)B(2) complex to a putative damaged site, the DNA wraps around one UvrB monomer. DNA wrap is dependent on ATP binding by UvrB and probably causes local melting of the DNA helix, facilitating insertion of UvrB beta-hairpin between the DNA strands. Then UvrB probes one DNA strand for the presence of a lesion. If a lesion is found the UvrA subunits dissociate and the UvrB-DNA preincision complex is formed. This complex is subsequently bound by UvrC and the second UvrB is released. If no lesion is found, the DNA wraps around the other UvrB subunit that will check the other stand for damage. The polypeptide is UvrABC system protein B (Streptococcus sanguinis (strain SK36)).